The sequence spans 240 residues: Ubiquinone biosynthesis O-methyltransferase (240 aa).

S-adenosyl-L-methionine-binding residues include Arg44, Gly64, Asp85, and Met129.

This sequence belongs to the methyltransferase superfamily. UbiG/COQ3 family.

It catalyses the reaction a 3-demethylubiquinol + S-adenosyl-L-methionine = a ubiquinol + S-adenosyl-L-homocysteine + H(+). The enzyme catalyses a 3-(all-trans-polyprenyl)benzene-1,2-diol + S-adenosyl-L-methionine = a 2-methoxy-6-(all-trans-polyprenyl)phenol + S-adenosyl-L-homocysteine + H(+). It participates in cofactor biosynthesis; ubiquinone biosynthesis. O-methyltransferase that catalyzes the 2 O-methylation steps in the ubiquinone biosynthetic pathway. The sequence is that of Ubiquinone biosynthesis O-methyltransferase from Escherichia coli (strain K12 / MC4100 / BW2952).